Consider the following 449-residue polypeptide: Asparagine--tRNA ligase (449 aa).

The protein belongs to the class-II aminoacyl-tRNA synthetase family. In terms of assembly, homodimer.

It is found in the cytoplasm. It carries out the reaction tRNA(Asn) + L-asparagine + ATP = L-asparaginyl-tRNA(Asn) + AMP + diphosphate + H(+). The polypeptide is Asparagine--tRNA ligase (Mesomycoplasma hyopneumoniae (strain J / ATCC 25934 / NCTC 10110) (Mycoplasma hyopneumoniae)).